Reading from the N-terminus, the 40-residue chain is Photosystem II reaction center protein J (40 aa).

Residues 8–28 (IPLWLIGTVAGILVLGLLGIF) form a helical membrane-spanning segment.

It belongs to the PsbJ family. PSII is composed of 1 copy each of membrane proteins PsbA, PsbB, PsbC, PsbD, PsbE, PsbF, PsbH, PsbI, PsbJ, PsbK, PsbL, PsbM, PsbT, PsbX, PsbY, PsbZ, Psb30/Ycf12, at least 3 peripheral proteins of the oxygen-evolving complex and a large number of cofactors. It forms dimeric complexes.

The protein localises to the plastid. Its subcellular location is the chloroplast thylakoid membrane. Its function is as follows. One of the components of the core complex of photosystem II (PSII). PSII is a light-driven water:plastoquinone oxidoreductase that uses light energy to abstract electrons from H(2)O, generating O(2) and a proton gradient subsequently used for ATP formation. It consists of a core antenna complex that captures photons, and an electron transfer chain that converts photonic excitation into a charge separation. The polypeptide is Photosystem II reaction center protein J (Physcomitrium patens (Spreading-leaved earth moss)).